Reading from the N-terminus, the 350-residue chain is Melatonin receptor type 1A (350 aa).

The Extracellular portion of the chain corresponds to Met-1–Ala-29. 2 N-linked (GlcNAc...) asparagine glycosylation sites follow: Asn-4 and Asn-10. The chain crosses the membrane as a helical span at residues Leu-30 to Leu-50. At Ser-51–Asn-63 the chain is on the cytoplasmic side. A helical transmembrane segment spans residues Ile-64–Val-84. Residues Leu-85–Val-102 are Extracellular-facing. A disulfide bond links Cys-100 and Cys-177. Residues Ser-103–Ile-123 form a helical membrane-spanning segment. Over Asn-124–Lys-142 the chain is Cytoplasmic. A helical membrane pass occupies residues Asn-143–Leu-163. Residues Asn-162 and Gln-181 each contribute to the melatonin site. At Arg-164–Tyr-187 the chain is on the extracellular side. A helical transmembrane segment spans residues Thr-188 to Leu-208. Topologically, residues Arg-209–Met-240 are cytoplasmic. Residues Phe-241–Val-261 form a helical membrane-spanning segment. Over Ala-262–Glu-274 the chain is Extracellular. The helical transmembrane segment at Trp-275 to Tyr-295 threads the bilayer. The Cytoplasmic segment spans residues Gly-296–Val-350.

The protein belongs to the G-protein coupled receptor 1 family. Expressed in hypophyseal pars tuberalis and hypothalamic suprachiasmatic nuclei (SCN). Hippocampus.

The protein localises to the cell membrane. High affinity receptor for melatonin. Likely to mediate the reproductive and circadian actions of melatonin. The activity of this receptor is mediated by pertussis toxin sensitive G proteins that inhibit adenylate cyclase activity. Possibly involved in sleep induction, by melatonin activation of the potassium channel KCNMA1/BK and the dissociation of G-beta and G-gamma subunits, thereby decreasing synaptic transmission. This is Melatonin receptor type 1A (MTNR1A) from Homo sapiens (Human).